We begin with the raw amino-acid sequence, 366 residues long: Adenine DNA glycosylase (366 aa).

30-31 (WR) is a DNA binding site. Glutamate 43 serves as the catalytic Proton donor/acceptor. DNA-binding positions include 48-49 (QT), 86-88 (LGY), tyrosine 126, and glutamate 188. Residues 105–133 (RYGGKVPDDPDEFSRLKGVGPYTVGAVLS) form the HhH domain. [4Fe-4S] cluster-binding residues include cysteine 198, cysteine 205, cysteine 208, and cysteine 214. Serine 308 lines the DNA pocket.

This sequence belongs to the Nth/MutY family. The cofactor is [4Fe-4S] cluster.

The enzyme catalyses Hydrolyzes free adenine bases from 7,8-dihydro-8-oxoguanine:adenine mismatched double-stranded DNA, leaving an apurinic site.. In terms of biological role, base excision repair (BER) glycosylase that initiates repair of A:oxoG to C:G by removing the inappropriately paired adenine base from the DNA backbone, generating an abasic site product. 8-oxoguanine (oxoG) is a genotoxic DNA lesion resulting from oxidation of guanine; this residue is misread by replicative DNA polymerases, that insert adenine instead of cytosine opposite the oxidized damaged base. Shows a powerful dicrimination of A versus C, since it does not cleave cytosine in oxoG:C pairs. May also be able to remove adenine from A:G mispairs, although this activity may not be physiologically relevant. The chain is Adenine DNA glycosylase from Geobacillus stearothermophilus (Bacillus stearothermophilus).